Reading from the N-terminus, the 331-residue chain is Pantothenate kinase (331 aa).

Residue 109–116 (GSVAVGKS) coordinates ATP.

Belongs to the prokaryotic pantothenate kinase family.

The protein localises to the cytoplasm. It carries out the reaction (R)-pantothenate + ATP = (R)-4'-phosphopantothenate + ADP + H(+). Its pathway is cofactor biosynthesis; coenzyme A biosynthesis; CoA from (R)-pantothenate: step 1/5. This is Pantothenate kinase from Rhizobium rhizogenes (strain K84 / ATCC BAA-868) (Agrobacterium radiobacter).